The primary structure comprises 328 residues: Stress response kinase A (328 aa).

Catalysis depends on D201, which acts as the Proton acceptor. Positions 206 and 217 each coordinate Mg(2+). D217 is an active-site residue.

It belongs to the SrkA/RdoA protein kinase family. Monomer. Mg(2+) is required as a cofactor.

It localises to the cytoplasm. The catalysed reaction is L-seryl-[protein] + ATP = O-phospho-L-seryl-[protein] + ADP + H(+). It catalyses the reaction L-threonyl-[protein] + ATP = O-phospho-L-threonyl-[protein] + ADP + H(+). In terms of biological role, a protein kinase that phosphorylates Ser and Thr residues. Probably acts to suppress the effects of stress linked to accumulation of reactive oxygen species. Probably involved in the extracytoplasmic stress response. Also has a role in LPS synthesis, through regulation of the galETK expression. A protein kinase that phosphorylates Ser and Thr residues. Probably acts to suppress the effects of stress linked to accumulation of reactive oxygen species. Probably involved in the extracytoplasmic stress response. The protein is Stress response kinase A of Shigella flexneri.